The sequence spans 1149 residues: Structural maintenance of chromosomes protein 6 homolog smc-6 (1149 aa).

77–84 serves as a coordination point for ATP; the sequence is GPNGSGKS. Positions 309–460 form a coiled coil; it reads LQDETKKEYA…EEEKYTIQRD (152 aa). The flexible hinge stretch occupies residues 461–687; it reads INQLRRKIEQ…DVDEGALARL (227 aa). Residues 714-920 adopt a coiled-coil conformation; that stretch reads YNERDQTKAA…AVDRATVGCD (207 aa). Disordered regions lie at residues 875-900 and 1026-1060; these read NDKKNHPMPPGETDPPDLSSFPSTTE and EVDEHSYDDDSDDSTGPRRKKSKKSGQKKKRVRDL. Positions 1026–1038 are enriched in acidic residues; the sequence is EVDEHSYDDDSDD. Residues 1042 to 1058 show a composition bias toward basic residues; that stretch reads PRRKKSKKSGQKKKRVR.

This sequence belongs to the SMC family. SMC6 subfamily. As to quaternary structure, interacts with smc-5. As to expression, expressed in the germline (at protein level).

Its subcellular location is the nucleus. The protein localises to the chromosome. In terms of biological role, core component of the smc-5/smc-6 complex. Involved in DNA double-strand break repair by promoting sister-chromatid homologous recombination during meiosis. Also plays a role in the DNA damage repair of ultraviolet (UV) radiation-induced DNA lesions. Promotes efficient DNA replication. This is Structural maintenance of chromosomes protein 6 homolog smc-6 from Caenorhabditis elegans.